The primary structure comprises 494 residues: UPF0371 protein SPH_0451 (494 aa).

Belongs to the UPF0371 family.

This chain is UPF0371 protein SPH_0451, found in Streptococcus pneumoniae (strain Hungary19A-6).